The following is a 412-amino-acid chain: L-cysteine:1D-myo-inositol 2-amino-2-deoxy-alpha-D-glucopyranoside ligase (412 aa).

Cysteine 45 is a binding site for Zn(2+). Residues 45–48 (CGIT), threonine 60, and 83–85 (NIT) contribute to the L-cysteinyl-5'-AMP site. The short motif at 47–57 (ITPYDAAHLGH) is the 'HIGH' region element. Residues 185–190 (ERGGDP) carry the 'ERGGDP' region motif. Tryptophan 225 contacts L-cysteinyl-5'-AMP. Cysteine 229 lines the Zn(2+) pocket. 247-249 (GDD) contacts L-cysteinyl-5'-AMP. Histidine 254 contacts Zn(2+). Residue valine 281 coordinates L-cysteinyl-5'-AMP. Residues 287 to 291 (KMSKS) carry the 'KMSKS' region motif.

Belongs to the class-I aminoacyl-tRNA synthetase family. MshC subfamily. In terms of assembly, monomer. The cofactor is Zn(2+).

The catalysed reaction is 1D-myo-inositol 2-amino-2-deoxy-alpha-D-glucopyranoside + L-cysteine + ATP = 1D-myo-inositol 2-(L-cysteinylamino)-2-deoxy-alpha-D-glucopyranoside + AMP + diphosphate + H(+). In terms of biological role, catalyzes the ATP-dependent condensation of GlcN-Ins and L-cysteine to form L-Cys-GlcN-Ins. The sequence is that of L-cysteine:1D-myo-inositol 2-amino-2-deoxy-alpha-D-glucopyranoside ligase from Thermobifida fusca (strain YX).